Reading from the N-terminus, the 230-residue chain is Osmotin-like protein PR-5x (230 aa).

Positions 1-25 (MYTNMGYLTSSFIFFFLALVTYTYA) are cleaved as a signal peptide. 8 disulfide bridges follow: Cys-34/Cys-229, Cys-76/Cys-86, Cys-91/Cys-97, Cys-145/Cys-217, Cys-150/Cys-200, Cys-158/Cys-168, Cys-172/Cys-181, and Cys-182/Cys-187.

This sequence belongs to the thaumatin family.

It localises to the secreted. The protein localises to the vacuole. The enzyme catalyses Endohydrolysis of (1-&gt;3)- or (1-&gt;4)-linkages in beta-D-glucans when the glucose residue whose reducing group is involved in the linkage to be hydrolyzed is itself substituted at C-3.. Its function is as follows. Antifungal protein. May bind to beta-glucans and have beta-1,3-D-glucanase activity. This chain is Osmotin-like protein PR-5x, found in Solanum lycopersicum (Tomato).